Reading from the N-terminus, the 84-residue chain is Putative UPF0320 protein YAL068W-A (84 aa).

This sequence belongs to the UPF0320 family.

The chain is Putative UPF0320 protein YAL068W-A from Saccharomyces cerevisiae (strain ATCC 204508 / S288c) (Baker's yeast).